A 466-amino-acid polypeptide reads, in one-letter code: MNQGKIVQIIGAIVDVEFPRNNVPKVYNALKIDGTAIILEVQQQLGDGIVRTIALGSTDGLKRNLIATDTGHAITVPVGTGTLGRIMDVLGNPIDEAGPITYTDQWEIHRNAPSYEDQASTTELLETGIKVIDLMCPFAKGGKVGLFGGAGVGKTVNMMELINNIAKAHSGLSVFAGVGERTREGNDFYHEMKDSNVLDKVAMVYGQMNEPPGNRLRVALTGLTMAEYFRDEKDSSGKGKDVLLFIDNIYRYTLAGTEVSALLGRMPSAVGYQPTLAEEMGVLQERITSTANGSITSIQAVYVPADDLTDPSPATTFGHLDSTVTLSRSIAALGIYPAVDPLDSSSRQMDPLIIGEEHYNTTQRVQQTLQKYKDLKDIIAILGMDELSEDDKLSVSRARKIERFFSQPFHVAEVFTGAPGKYVPLKDTIRGFKAIVDGEYDHLPEQAFYMVGNIEEVIEKANKMTA.

148 to 155 (GGAGVGKT) is a binding site for ATP.

The protein belongs to the ATPase alpha/beta chains family. As to quaternary structure, F-type ATPases have 2 components, CF(1) - the catalytic core - and CF(0) - the membrane proton channel. CF(1) has five subunits: alpha(3), beta(3), gamma(1), delta(1), epsilon(1). CF(0) has three main subunits: a(1), b(2) and c(9-12). The alpha and beta chains form an alternating ring which encloses part of the gamma chain. CF(1) is attached to CF(0) by a central stalk formed by the gamma and epsilon chains, while a peripheral stalk is formed by the delta and b chains.

The protein resides in the cell inner membrane. The enzyme catalyses ATP + H2O + 4 H(+)(in) = ADP + phosphate + 5 H(+)(out). Its function is as follows. Produces ATP from ADP in the presence of a proton gradient across the membrane. The catalytic sites are hosted primarily by the beta subunits. The chain is ATP synthase subunit beta from Xylella fastidiosa (strain M23).